The primary structure comprises 396 residues: Tail sheath protein (396 aa).

This sequence belongs to the myoviridae tail sheath protein family. In terms of assembly, homomultimer.

The protein localises to the virion. It localises to the host cytoplasm. In terms of biological role, polymerizes as an extended helical structure around the baseplate-tail tube complex. During ejection, the sheath shifts to a contracted form, thereby making the inner tail tube protrude through the host cell envelope. This chain is Tail sheath protein (FI), found in Enterobacteriaceae (Bacteriophage P2).